The chain runs to 490 residues: Subtilisin-like protease 8 (490 aa).

Residues 1 to 26 form the signal peptide; the sequence is MKGLLSLSVLPVLAYASPMIVDSIHQ. A propeptide spanning residues 27–134 is cleaved from the precursor; it reads DAAPILSSTN…YIERDSEVRA (108 aa). The region spanning 43–133 is the Inhibitor I9 domain; it reads SYIVVFKKGV…EYIERDSEVR (91 aa). The Peptidase S8 domain occupies 144 to 450; sequence PWGLARISHR…GGSDNYKEIV (307 aa). Active-site charge relay system residues include Asp180 and His212. Asn282 is a glycosylation site (N-linked (GlcNAc...) asparagine). The active-site Charge relay system is Ser378. N-linked (GlcNAc...) asparagine glycosylation occurs at Asn455.

The protein belongs to the peptidase S8 family.

It localises to the secreted. Secreted subtilisin-like serine protease with keratinolytic activity that contributes to pathogenicity. This is Subtilisin-like protease 8 (SUB8) from Arthroderma otae (strain ATCC MYA-4605 / CBS 113480) (Microsporum canis).